The chain runs to 322 residues: F-box protein At2g16300 (322 aa).

Residues 2–50 (ADWSLLPNDLLELIVGHLETSFEIVLFRSVCSSWRSVVPPQDQSRCLSI) form the F-box domain.

This chain is F-box protein At2g16300, found in Arabidopsis thaliana (Mouse-ear cress).